Reading from the N-terminus, the 219-residue chain is Large ribosomal subunit protein uL3 (219 aa).

This sequence belongs to the universal ribosomal protein uL3 family. In terms of assembly, part of the 50S ribosomal subunit. Forms a cluster with proteins L14 and L19.

In terms of biological role, one of the primary rRNA binding proteins, it binds directly near the 3'-end of the 23S rRNA, where it nucleates assembly of the 50S subunit. The sequence is that of Large ribosomal subunit protein uL3 from Chlamydia pneumoniae (Chlamydophila pneumoniae).